Reading from the N-terminus, the 165-residue chain is RxLR effector protein CRE12 (165 aa).

The N-terminal stretch at 1-23 (MRLAAFVLVAVAFAIIPDGRVSA) is a signal peptide. The RxLR-dEER signature appears at 40–59 (RLLRLNAVPQPVETGNQEER).

It belongs to the RxLR effector family.

The protein localises to the secreted. The protein resides in the host cell. Its function is as follows. Effector that is involved in host plant infection. Contributes to virulence during the early infection stage, by inhibiting plant defense responses induced by both PAMP-triggered immunity (PTI) and effector-triggered immunity (ETI). This Phytophthora infestans (strain T30-4) (Potato late blight agent) protein is RxLR effector protein CRE12.